The primary structure comprises 258 residues: Deoxyribose-phosphate aldolase (258 aa).

D101 acts as the Proton donor/acceptor in catalysis. The Schiff-base intermediate with acetaldehyde role is filled by K166. K200 acts as the Proton donor/acceptor in catalysis.

It belongs to the DeoC/FbaB aldolase family. DeoC type 2 subfamily.

The protein localises to the cytoplasm. The catalysed reaction is 2-deoxy-D-ribose 5-phosphate = D-glyceraldehyde 3-phosphate + acetaldehyde. The protein operates within carbohydrate degradation; 2-deoxy-D-ribose 1-phosphate degradation; D-glyceraldehyde 3-phosphate and acetaldehyde from 2-deoxy-alpha-D-ribose 1-phosphate: step 2/2. In terms of biological role, catalyzes a reversible aldol reaction between acetaldehyde and D-glyceraldehyde 3-phosphate to generate 2-deoxy-D-ribose 5-phosphate. This chain is Deoxyribose-phosphate aldolase, found in Haemophilus ducreyi (strain 35000HP / ATCC 700724).